A 98-amino-acid chain; its full sequence is Lipolysis-activating peptide 1-alpha chain (98 aa).

Positions 1-22 (MMKFVLFGMIVILFSLMGSIRG) are cleaved as a signal peptide. In terms of domain architecture, LCN-type CS-alpha/beta spans 26–89 (PGNYPTNAYG…IWNAVKNHCT (64 aa)). 3 disulfide bridges follow: cysteine 40–cysteine 63, cysteine 49–cysteine 68, and cysteine 53–cysteine 70. Asparagine 96 bears the Asparagine amide mark.

It belongs to the long (3 C-C) scorpion toxin superfamily. In terms of assembly, monomer (edited version) and heterodimer (non-edited version) of this alpha chain and a beta chain (AC Q95P90). Expressed by the venom gland.

It is found in the secreted. In terms of biological role, the heterodimer non-edited LVP1 induces lipolysis in rat adipocytes. Induction of lipolysis by LVP1 appears to be mediated through the beta-2 adrenergic receptor pathway (ADRB2). The edited BmKBTx, similar to beta-toxins, may modulate voltage-gated sodium channels (Nav) and may block voltage-gated potassium channels (Kv). Seems to be a rare component in the venom. The sequence is that of Lipolysis-activating peptide 1-alpha chain (LVP1a) from Olivierus martensii (Manchurian scorpion).